A 518-amino-acid chain; its full sequence is Protein nucleotidyltransferase YdiU (518 aa).

The tract at residues 1–22 is disordered; the sequence is MTHLQFDNRLRAELPGDPEEGP. Glycine 100, glycine 102, arginine 103, lysine 123, aspartate 135, glycine 136, arginine 193, and arginine 200 together coordinate ATP. Aspartate 270 (proton acceptor) is an active-site residue. Residues asparagine 271 and aspartate 280 each coordinate Mg(2+). Aspartate 280 contributes to the ATP binding site.

Belongs to the SELO family. It depends on Mg(2+) as a cofactor. Requires Mn(2+) as cofactor.

It carries out the reaction L-seryl-[protein] + ATP = 3-O-(5'-adenylyl)-L-seryl-[protein] + diphosphate. The catalysed reaction is L-threonyl-[protein] + ATP = 3-O-(5'-adenylyl)-L-threonyl-[protein] + diphosphate. The enzyme catalyses L-tyrosyl-[protein] + ATP = O-(5'-adenylyl)-L-tyrosyl-[protein] + diphosphate. It catalyses the reaction L-histidyl-[protein] + UTP = N(tele)-(5'-uridylyl)-L-histidyl-[protein] + diphosphate. It carries out the reaction L-seryl-[protein] + UTP = O-(5'-uridylyl)-L-seryl-[protein] + diphosphate. The catalysed reaction is L-tyrosyl-[protein] + UTP = O-(5'-uridylyl)-L-tyrosyl-[protein] + diphosphate. Functionally, nucleotidyltransferase involved in the post-translational modification of proteins. It can catalyze the addition of adenosine monophosphate (AMP) or uridine monophosphate (UMP) to a protein, resulting in modifications known as AMPylation and UMPylation. This chain is Protein nucleotidyltransferase YdiU, found in Xanthomonas campestris pv. campestris (strain 8004).